The chain runs to 665 residues: MSPLLRFRKLSSFSEDTINPKPKQSATVEKPKRRRSGRCSCVDSCCWLIGYLCTAWWLLLFLYHSVPVPAMLQAPESPGTRLSRDGVKAFHPVILVPGIVTGGLELWEGRPCAEGLFRKRLWGASFSEILRRPLCWLEHLSLDSETGLDPSGIRVRAVPGLVAADYFAPCYFAWAVLIENLAKIGYEGKNLHMASYDWRLSFHNTEVRDQSLSRLKSKIELMYATNGFKKVVVVPHSMGAIYFLHFLKWVETPLPDGGGGGGPGWCAKHIKSVVNIGPAFLGVPKAVSNLLSAEGKDIAYARSLAPGLLDSELLKLQTLEHLMRMSHSWDSIVSLLPKGGEAIWGDLDSHAEEGLNCIYSKRKSSQLSLSNLHKQNYSLKPVSRVKEPAKYGRIVSFGKRASELPSSQLSTLNVKELSRVDGNSNDSTSCGEFWSEYNEMSRESIVKVAENTAYTATTVLDLLRFIAPKMMRRAEAHFSHGIADDLDDPKYGHYKYWSNPLETKLPEAPEMEMYCLYGVGIPTERSYIYKLATSSGKCKSSIPFRIDGSLDGDDVCLKGGTRFADGDESVPVISAGFMCAKGWRGKTRFNPSGMDTFLREYKHKPPGSLLESRGTESGAHVDIMGNVGLIEDVLRIAAGASGQEIGGDRIYSDVMRMSERISIKL.

Residues 48–68 (LIGYLCTAWWLLLFLYHSVPV) form a helical membrane-spanning segment. Ser237 functions as the Acyl-ester intermediate in the catalytic mechanism. Catalysis depends on charge relay system residues Asp567 and His620.

Belongs to the AB hydrolase superfamily. Lipase family.

The protein resides in the membrane. It carries out the reaction a glycerophospholipid + a 1,2-diacyl-sn-glycerol = a monoacylglycerophospholipid + a triacyl-sn-glycerol. The sequence is that of Putative phospholipid:diacylglycerol acyltransferase 2 (PDAT2) from Arabidopsis thaliana (Mouse-ear cress).